A 205-amino-acid chain; its full sequence is Molybdenum cofactor guanylyltransferase (205 aa).

Residues 14–16, Lys-27, Asp-77, and Asp-107 each bind GTP; that span reads LAG. Residue Asp-107 coordinates Mg(2+).

Belongs to the MobA family. Monomer. The cofactor is Mg(2+).

It localises to the cytoplasm. The catalysed reaction is Mo-molybdopterin + GTP + H(+) = Mo-molybdopterin guanine dinucleotide + diphosphate. Functionally, transfers a GMP moiety from GTP to Mo-molybdopterin (Mo-MPT) cofactor (Moco or molybdenum cofactor) to form Mo-molybdopterin guanine dinucleotide (Mo-MGD) cofactor. The polypeptide is Molybdenum cofactor guanylyltransferase (Burkholderia ambifaria (strain ATCC BAA-244 / DSM 16087 / CCUG 44356 / LMG 19182 / AMMD) (Burkholderia cepacia (strain AMMD))).